We begin with the raw amino-acid sequence, 527 residues long: MILSSYSSFQSVLCCCCCRCSVQKRQVRTQISLSREEELSEKHSQRQRPWFAKLMGKTQSNRGGVQPSKRKPLPPLPQEPPDERIQVKALYDFLPREPGNLALKRAEEYLILERCDPHWWKARDRFGNEGLIPSNYVTENRLANLEIYEWYHKNITRNQTERLLRQEAKEGAFIVRDSRHLGSYTISVFTRARRHTQSSIKHYQIKKNDSGQWYITERHLFPSVPELIQYHQYNAAGLISRLRYPIGLLGSCLPATSGFSYEKWEIDPSELAFVKEIGSGQFGVVHLGEWRAHIPVAIKAINEGSMSEEDFIEEAKVMMKLSHSRLVQLYGVCIQQKPLYIVTEFMENGCLLDYLRERKGQLQKALLLSMCQDICEGMAYLERSCYIHRDLAARNCLVSSACVVKISDFGMARYVLDDEYISSSGAKFPVKWCPPEVFHFNKYSSKSDVWSFGVLMWEVFTEGKMPFENKSNLQVVEAISQGFRLYRPHLAPMTIYRVMYSCWHESPKGRPTFAELLQVLTEIAETW.

Positions 58–81 are disordered; that stretch reads TQSNRGGVQPSKRKPLPPLPQEPP. The SH3 domain maps to 82–142; that stretch reads DERIQVKALY…PSNYVTENRL (61 aa). Tyr91 is subject to Phosphotyrosine; by autocatalysis. The SH2 domain occupies 150-246; sequence WYHKNITRNQ…GLISRLRYPI (97 aa). The region spanning 271–527 is the Protein kinase domain; sequence LAFVKEIGSG…QVLTEIAETW (257 aa). ATP-binding positions include 277–285 and Lys299; that span reads IGSGQFGVV. Residue Asp390 is the Proton acceptor of the active site. Tyr420 is modified (phosphotyrosine; by FYN and autocatalysis).

This sequence belongs to the protein kinase superfamily. Tyr protein kinase family. TEC subfamily. In terms of assembly, interacts with PARP1 and EEF1A1. Interacts with SH2D2A. Interacts with FYN. Phosphorylated at Tyr-420 by FYN. Autophosphorylation at Tyr-91 is critical for the activation of TXK, leading to the up-regulation of IFN-gamma gene transcription. Post-translationally, the cysteine string at the N-terminus is palmitoylated and required for the proper subcellular location. As to expression, expressed in early thymocytes, T-cells and mast cells.

It is found in the cytoplasm. The protein localises to the nucleus. The protein resides in the cell membrane. It catalyses the reaction L-tyrosyl-[protein] + ATP = O-phospho-L-tyrosyl-[protein] + ADP + H(+). Its activity is regulated as follows. Activated by phosphorylation by FYN. Non-receptor tyrosine kinase that plays a redundant role with ITK in regulation of the adaptive immune response. Regulates the development, function and differentiation of conventional T-cells and nonconventional NKT-cells. When antigen presenting cells (APC) activate T-cell receptor (TCR), a series of phosphorylation leads to the recruitment of TXK to the cell membrane, where it is phosphorylated at Tyr-420. Phosphorylation leads to TXK full activation. Also contributes to signaling from many receptors and participates in multiple downstream pathways, including regulation of the actin cytoskeleton. Like ITK, can phosphorylate PLCG1, leading to its localization in lipid rafts and activation, followed by subsequent cleavage of its substrates. In turn, the endoplasmic reticulum releases calcium in the cytoplasm and the nuclear activator of activated T-cells (NFAT) translocates into the nucleus to perform its transcriptional duty. Plays a role in the positive regulation of IFNG transcription in T-helper 1 cells as part of an IFNG promoter-binding complex with PARP1 and EEF1A1. Within the complex, phosphorylates both PARP1 and EEF1A1. Also phosphorylates key sites in LCP2 leading to the up-regulation of Th1 preferred cytokine IL-2. Phosphorylates 'Tyr-201' of CTLA4 which leads to the association of PI-3 kinase with the CTLA4 receptor. This is Tyrosine-protein kinase TXK (Txk) from Mus musculus (Mouse).